The sequence spans 314 residues: tRNA pseudouridine synthase B (314 aa).

Histidine 43 contributes to the substrate binding site. The active-site Nucleophile is the aspartate 48. 3 residues coordinate substrate: tyrosine 76, tyrosine 179, and leucine 200.

Belongs to the pseudouridine synthase TruB family. Type 1 subfamily.

It catalyses the reaction uridine(55) in tRNA = pseudouridine(55) in tRNA. In terms of biological role, responsible for synthesis of pseudouridine from uracil-55 in the psi GC loop of transfer RNAs. The protein is tRNA pseudouridine synthase B of Cronobacter sakazakii (strain ATCC BAA-894) (Enterobacter sakazakii).